A 341-amino-acid chain; its full sequence is S-adenosylmethionine:tRNA ribosyltransferase-isomerase (341 aa).

Belongs to the QueA family. As to quaternary structure, monomer.

Its subcellular location is the cytoplasm. The catalysed reaction is 7-aminomethyl-7-carbaguanosine(34) in tRNA + S-adenosyl-L-methionine = epoxyqueuosine(34) in tRNA + adenine + L-methionine + 2 H(+). Its pathway is tRNA modification; tRNA-queuosine biosynthesis. In terms of biological role, transfers and isomerizes the ribose moiety from AdoMet to the 7-aminomethyl group of 7-deazaguanine (preQ1-tRNA) to give epoxyqueuosine (oQ-tRNA). This Trichlorobacter lovleyi (strain ATCC BAA-1151 / DSM 17278 / SZ) (Geobacter lovleyi) protein is S-adenosylmethionine:tRNA ribosyltransferase-isomerase.